A 675-amino-acid chain; its full sequence is NADH-ubiquinone oxidoreductase 75 kDa subunit (675 aa).

The region spanning 2 to 80 is the 2Fe-2S ferredoxin-type domain; the sequence is KNISFKVNDF…SMNIYTNTLK (79 aa). [2Fe-2S] cluster is bound by residues Cys36, Cys47, Cys50, and Cys64. One can recognise a 4Fe-4S His(Cys)3-ligated-type domain in the interval 80-119; it reads KVKKARESVLEFLLANHPLDCPICDQGGECDLQDQSVVFG. [4Fe-4S] cluster contacts are provided by His96, Cys100, Cys103, Cys109, Cys148, Cys151, Cys154, and Cys198. One can recognise a 4Fe-4S Mo/W bis-MGD-type domain in the interval 217–273; sequence LKSYNSIDVLDSLHSNIRVDIRGTKIMRILPRVNSELNEDWITDKIRFSYDSFRRQR.

The protein belongs to the complex I 75 kDa subunit family. In terms of assembly, complex I is composed of about 30 different subunits. The cofactor is [2Fe-2S] cluster. It depends on [4Fe-4S] cluster as a cofactor.

The protein resides in the mitochondrion inner membrane. The enzyme catalyses a ubiquinone + NADH + 5 H(+)(in) = a ubiquinol + NAD(+) + 4 H(+)(out). Functionally, core subunit of the mitochondrial membrane respiratory chain NADH dehydrogenase (Complex I) that is believed to belong to the minimal assembly required for catalysis. Complex I functions in the transfer of electrons from NADH to the respiratory chain. The immediate electron acceptor for the enzyme is believed to be ubiquinone. This is the largest subunit of complex I and it is a component of the iron-sulfur (IP) fragment of the enzyme. It may form part of the active site crevice where NADH is oxidized. The chain is NADH-ubiquinone oxidoreductase 75 kDa subunit (NAD11) from Acanthamoeba castellanii (Amoeba).